A 173-amino-acid chain; its full sequence is Photosystem I assembly protein Ycf3 (173 aa).

TPR repeat units lie at residues 35–68 (AFVYYRDGMSAQADGEYAEALDNYYEALKLEEDP), 72–105 (SYILYNIGIIHASNGDQEKALEYYNQSVDLNPRM), and 120–153 (GEKAREEGREEEAEALYDKAAEYWKQAIRLAPNN).

Belongs to the Ycf3 family.

It localises to the cellular thylakoid membrane. In terms of biological role, essential for the assembly of the photosystem I (PSI) complex. May act as a chaperone-like factor to guide the assembly of the PSI subunits. The chain is Photosystem I assembly protein Ycf3 from Rippkaea orientalis (strain PCC 8801 / RF-1) (Cyanothece sp. (strain PCC 8801)).